Consider the following 1238-residue polypeptide: Lysine-specific demethylase JMJ703 (1238 aa).

Positions 56 to 79 (EECQPSAAVSRSDTPCSTSGTQTC) are disordered. Residues 62–79 (AAVSRSDTPCSTSGTQTC) are compositionally biased toward polar residues. One can recognise a JmjN domain in the interval 154 to 195 (APVFYPTEEEFEDTLKYIESIRPMAEPYGICRIVPPSSWKPP). Residues 215–266 (KVDKLQNRKSSKKGRRGGMMKRRKLAESEENSATAHTQTGMQQSPERFGFEP) form a disordered region. Basic residues predominate over residues 221–238 (NRKSSKKGRRGGMMKRRK). Positions 245-259 (NSATAHTQTGMQQSP) are enriched in polar residues. Residues 348 to 514 (KYAQSGWNLN…IGHNAVELYR (167 aa)) form the JmjC domain. Fe cation-binding residues include histidine 394, glutamate 396, and histidine 482. Disordered regions lie at residues 699–725 (GPRR…QKDE), 777–798 (YNGG…SSPS), 834–863 (TGDS…SSLE), and 910–978 (ASSQ…LQRT). A compositionally biased stretch (low complexity) spans 706-719 (SQASAVSLVSSSTS). Over residues 910 to 923 (ASSQQFVRTGPWTQ) the composition is skewed to polar residues. Positions 924–936 (SASHEASSPSTSA) are enriched in low complexity. The segment covering 964–978 (SFSNQQPNDGRLQRT) has biased composition (polar residues). Residues 1019 to 1077 (VVHRFKCSVEPLEIGVVLSGRLWSSSQAIFPKGFRSRVKYFSIVDPIQMAYYISEILDA) enclose the FYR N-terminal domain. Residues 1079–1169 (MQGPLFMVKL…HICTEYWRSR (91 aa)) enclose the FYR C-terminal domain.

The cofactor is Fe(2+). As to expression, expressed in roots, leaf sheaths, stems and panicles.

Its subcellular location is the nucleus. It catalyses the reaction N(6),N(6),N(6)-trimethyl-L-lysyl(4)-[histone H3] + 3 2-oxoglutarate + 3 O2 = L-lysyl(4)-[histone H3] + 3 formaldehyde + 3 succinate + 3 CO2. Its function is as follows. Histone demethylase that demethylates 'Lys-4' (H3K4me) of histone H3 with a specific activity for H3K4me3, H3K4me2 and H3K4me1. No activity on H3K9me3/2/1, H3K27me3/2/1 and H3K36me3/2/1. Involved in the control of stem elongation by regulating methylation states of H3K4me3 on cytokinin oxidase (CKX) gene family, which may cause increased expression of CKX genes and reduced cytokinin levels. Prevents ectopic retrotransposition by regulating the levels of H3K4me3 in two non-LTR retrotransposons KARMA and LINE-1 (L1) and reinforcing their repressed states. This Oryza sativa subsp. japonica (Rice) protein is Lysine-specific demethylase JMJ703 (JMJ703).